The following is a 209-amino-acid chain: Peroxiredoxin (209 aa).

The Thioredoxin domain occupies 2 to 156 (PLIGDKFPEM…IVRMIRAFRV (155 aa)). Cys-44 functions as the Cysteine sulfenic acid (-SOH) intermediate in the catalytic mechanism. Arg-119 contacts substrate. A disulfide bridge links Cys-198 with Cys-204.

The protein belongs to the peroxiredoxin family. Prx6 subfamily. As to quaternary structure, homodecamer. Pentamer of dimers that assemble into a ring structure.

Its subcellular location is the cytoplasm. The enzyme catalyses a hydroperoxide + [thioredoxin]-dithiol = an alcohol + [thioredoxin]-disulfide + H2O. In terms of biological role, thiol-specific peroxidase that catalyzes the reduction of hydrogen peroxide and organic hydroperoxides to water and alcohols, respectively. Plays a role in cell protection against oxidative stress by detoxifying peroxides. This chain is Peroxiredoxin, found in Methanothermobacter thermautotrophicus (strain ATCC 29096 / DSM 1053 / JCM 10044 / NBRC 100330 / Delta H) (Methanobacterium thermoautotrophicum).